A 339-amino-acid polypeptide reads, in one-letter code: tRNA-specific 2-thiouridylase MnmA (339 aa).

ATP contacts are provided by residues 8–15 (AMSGGVDS) and M34. Residue C94 is the Nucleophile of the active site. C94 and C188 are disulfide-bonded. An ATP-binding site is contributed by G118. Residues 136-138 (KDQ) form an interaction with tRNA region. The active-site Cysteine persulfide intermediate is the C188. Residues 290 to 291 (RY) form an interaction with tRNA region.

It belongs to the MnmA/TRMU family.

The protein localises to the cytoplasm. It carries out the reaction S-sulfanyl-L-cysteinyl-[protein] + uridine(34) in tRNA + AH2 + ATP = 2-thiouridine(34) in tRNA + L-cysteinyl-[protein] + A + AMP + diphosphate + H(+). In terms of biological role, catalyzes the 2-thiolation of uridine at the wobble position (U34) of tRNA, leading to the formation of s(2)U34. The polypeptide is tRNA-specific 2-thiouridylase MnmA (Nitratiruptor sp. (strain SB155-2)).